The primary structure comprises 213 residues: Large ribosomal subunit protein uL1 (213 aa).

This sequence belongs to the universal ribosomal protein uL1 family. As to quaternary structure, part of the 50S ribosomal subunit.

In terms of biological role, binds directly to 23S rRNA. Probably involved in E site tRNA release. Protein L1 is also a translational repressor protein, it controls the translation of its operon by binding to its mRNA. In Methanocella arvoryzae (strain DSM 22066 / NBRC 105507 / MRE50), this protein is Large ribosomal subunit protein uL1.